Here is a 453-residue protein sequence, read N- to C-terminus: Ribosomal protein uS12 methylthiotransferase RimO (453 aa).

Positions 6–116 (PTVGIVSLGC…VLTAVHEAIA (111 aa)) constitute an MTTase N-terminal domain. [4Fe-4S] cluster is bound by residues Cys15, Cys51, Cys80, Cys148, Cys152, and Cys155. The Radical SAM core domain occupies 134 to 371 (LTPKHFAYLK…MQLQQQISAN (238 aa)). The region spanning 374-440 (QAKIGKTIQV…EYDLWATPVG (67 aa)) is the TRAM domain.

This sequence belongs to the methylthiotransferase family. RimO subfamily. [4Fe-4S] cluster is required as a cofactor.

The protein resides in the cytoplasm. The catalysed reaction is L-aspartate(89)-[ribosomal protein uS12]-hydrogen + (sulfur carrier)-SH + AH2 + 2 S-adenosyl-L-methionine = 3-methylsulfanyl-L-aspartate(89)-[ribosomal protein uS12]-hydrogen + (sulfur carrier)-H + 5'-deoxyadenosine + L-methionine + A + S-adenosyl-L-homocysteine + 2 H(+). In terms of biological role, catalyzes the methylthiolation of an aspartic acid residue of ribosomal protein uS12. The sequence is that of Ribosomal protein uS12 methylthiotransferase RimO from Hydrogenovibrio crunogenus (strain DSM 25203 / XCL-2) (Thiomicrospira crunogena).